The following is a 202-amino-acid chain: MFTELRSKLSPPRGRAGAVRAGFGERRDVDATAHFSFCRTLLEHTVSAESIPCHLPRTPGTSLTWHDSRSQRAASSRPIKLLQQPGTDTPQGRLYSDHYGLYHTSPSLGGLTRPVVLWSQQDVCKWLKKHCPHNYLVYVEAFSQHAITGRALLRLNAEKLQRMGLAQEAQRQEVLQQVLRLQVREEGRSLQLLSQASFGKMS.

In terms of domain architecture, SAM spans 118 to 184; it reads WSQQDVCKWL…LQQVLRLQVR (67 aa).

The protein is Sterile alpha motif domain-containing protein 10 (SAMD10) of Homo sapiens (Human).